Reading from the N-terminus, the 108-residue chain is UPF0145 protein alr2488 (108 aa).

This sequence belongs to the UPF0145 family.

The polypeptide is UPF0145 protein alr2488 (Nostoc sp. (strain PCC 7120 / SAG 25.82 / UTEX 2576)).